We begin with the raw amino-acid sequence, 180 residues long: MSRIGRMPIAIPAGVTVEVAENNKVTVKGPNGTLDRVLPAEMDIKVEGDTVVVTRPNELKRMKSLHGLTRTLIANMVTGVTTGYQKVLEINGVGYRAAKNGKELTLTLGYSHPVVMKDPEGVETILEGQNKITVKGIDKEKVGQYAAEIRDKRRPEPYKGKGIKYSDEVIRRKVGKTGKK.

Belongs to the universal ribosomal protein uL6 family. Part of the 50S ribosomal subunit.

Functionally, this protein binds to the 23S rRNA, and is important in its secondary structure. It is located near the subunit interface in the base of the L7/L12 stalk, and near the tRNA binding site of the peptidyltransferase center. This Lachnoclostridium phytofermentans (strain ATCC 700394 / DSM 18823 / ISDg) (Clostridium phytofermentans) protein is Large ribosomal subunit protein uL6.